Reading from the N-terminus, the 530-residue chain is White collar 2 protein (530 aa).

7 tandem repeats follow at residues 9-12 (GSSM), 21-24 (GSGM), 25-28 (GSGM), 29-32 (GSGM), 33-36 (GTGM), 37-40 (GTGM), and 41-44 (GTGM). Residues 9–44 (GSSMYGFGAMGMGSGMGSGMGSGMGTGMGTGMGTGM) are 7 X 4 AA repeats of G-[SAT]-G-M. The tract at residues 134 to 158 (IATPTTTTSGPSGGPSSGGGSTLTE) is disordered. A compositionally biased stretch (gly residues) spans 144–154 (PSGGPSSGGGS). One can recognise a PAS domain in the interval 162–232 (RRNWPAKVVE…AELNEAIATG (71 aa)). The disordered stretch occupies residues 315 to 343 (REEQEEQEESHRTWRMSQEGRSDVTPSDD). A GATA-type zinc finger spans residues 468 to 493 (CTDCGTLDSPEWRKGPSGPKTLCNAC). A disordered region spans residues 504–530 (KNANNNNNGGGIGGHNDIHTPMGDHMG).

As to quaternary structure, heterodimer of wc-1 and wc-2 (Potential). Binds to DNA.

Its subcellular location is the nucleus. Functionally, may function as a transcription factor involved in light regulation. Binds and affects blue light regulation of the al-3 gene. Wc-1 and wc-2 interact via homologous PAS domains, bind to promoters of light regulated genes such as frq, and activate transcription. May bind directly to frq. The polypeptide is White collar 2 protein (wc-2) (Neurospora crassa (strain ATCC 24698 / 74-OR23-1A / CBS 708.71 / DSM 1257 / FGSC 987)).